Reading from the N-terminus, the 1171-residue chain is ATP-dependent helicase/deoxyribonuclease subunit B (1171 aa).

The UvrD-like helicase ATP-binding domain maps to 1–343; that stretch reads MSLRFVIGRA…LVAEENYRYR (343 aa). ATP is bound at residue 8 to 15; the sequence is GRAGSGKS. In terms of domain architecture, UvrD-like helicase C-terminal spans 281-587; sequence MEQPRFHSPA…QFANIPPSLD (307 aa). Residues cysteine 805, cysteine 1129, cysteine 1132, and cysteine 1138 each contribute to the [4Fe-4S] cluster site.

This sequence belongs to the helicase family. AddB/RexB type 1 subfamily. In terms of assembly, heterodimer of AddA and AddB. Mg(2+) serves as cofactor. It depends on [4Fe-4S] cluster as a cofactor.

In terms of biological role, the heterodimer acts as both an ATP-dependent DNA helicase and an ATP-dependent, dual-direction single-stranded exonuclease. Recognizes the chi site generating a DNA molecule suitable for the initiation of homologous recombination. The AddB subunit has 5' -&gt; 3' nuclease activity but not helicase activity. The sequence is that of ATP-dependent helicase/deoxyribonuclease subunit B from Bacillus anthracis.